Here is a 428-residue protein sequence, read N- to C-terminus: Histidine--tRNA ligase (428 aa).

It belongs to the class-II aminoacyl-tRNA synthetase family. As to quaternary structure, homodimer.

The protein resides in the cytoplasm. It carries out the reaction tRNA(His) + L-histidine + ATP = L-histidyl-tRNA(His) + AMP + diphosphate + H(+). This Lactobacillus gasseri (strain ATCC 33323 / DSM 20243 / BCRC 14619 / CIP 102991 / JCM 1131 / KCTC 3163 / NCIMB 11718 / NCTC 13722 / AM63) protein is Histidine--tRNA ligase.